A 294-amino-acid polypeptide reads, in one-letter code: Shikimate dehydrogenase (NADP(+)) (294 aa).

Shikimate contacts are provided by residues 23 to 25 (SRS) and Thr-70. The active-site Proton acceptor is Lys-74. Asn-95 and Asp-110 together coordinate shikimate. Residues 135–139 (GAGGA), 159–164 (NRTASR), and Met-232 each bind NADP(+). Tyr-234 is a shikimate binding site. Residue Gly-255 participates in NADP(+) binding.

The protein belongs to the shikimate dehydrogenase family. As to quaternary structure, homodimer.

It carries out the reaction shikimate + NADP(+) = 3-dehydroshikimate + NADPH + H(+). It functions in the pathway metabolic intermediate biosynthesis; chorismate biosynthesis; chorismate from D-erythrose 4-phosphate and phosphoenolpyruvate: step 4/7. Functionally, involved in the biosynthesis of the chorismate, which leads to the biosynthesis of aromatic amino acids. Catalyzes the reversible NADPH linked reduction of 3-dehydroshikimate (DHSA) to yield shikimate (SA). This Cupriavidus pinatubonensis (strain JMP 134 / LMG 1197) (Cupriavidus necator (strain JMP 134)) protein is Shikimate dehydrogenase (NADP(+)).